A 176-amino-acid polypeptide reads, in one-letter code: Conjugal transfer protein TraF (176 aa).

An N-terminal signal peptide occupies residues 1–24; the sequence is MSKRAVIRFLGVAGLVLSGATVMG.

It belongs to the peptidase S26C family.

The protein localises to the periplasm. Its function is as follows. Involved in conjugal transfer of the plasmid. The protein is Conjugal transfer protein TraF (traF) of Agrobacterium fabrum (strain C58 / ATCC 33970) (Agrobacterium tumefaciens (strain C58)).